The sequence spans 203 residues: Small ribosomal subunit protein uS2 (203 aa).

The protein belongs to the universal ribosomal protein uS2 family.

The chain is Small ribosomal subunit protein uS2 from Methanoregula boonei (strain DSM 21154 / JCM 14090 / 6A8).